Here is a 402-residue protein sequence, read N- to C-terminus: Odorant receptor 22c (402 aa).

The Cytoplasmic portion of the chain corresponds to 1–42 (MTDSGQPAIADHFYRIPRISGLIVGLWPQRIRGGGGRPWHAH). The helical transmembrane segment at 43–63 (LLFVFAFAMVVVGAVGEVSYG) threads the bilayer. The Extracellular segment spans residues 64–73 (CVHLDNLVVA). The chain crosses the membrane as a helical span at residues 74-94 (LEAFCPGTTKAVCVLKLWVFF). Over 95-134 (RSNRRWAELVQRLRAILWESRRQEAQRMLVGLATTANRLS) the chain is Cytoplasmic. Residues 135 to 155 (LLLLSSGTATNAAFTLQPLIM) form a helical membrane-spanning segment. The Extracellular segment spans residues 156–173 (GLYRWIVQLPGQTELPFN). The helical transmembrane segment at 174 to 194 (IILPSFAVQPGVFPLTYVLLT) threads the bilayer. Topologically, residues 195–201 (ASGACTV) are cytoplasmic. A helical transmembrane segment spans residues 202 to 222 (FAFSFVDGFFICSCLYICGAF). Residues 223–276 (RLVQQDIRRIFADLHGDSVDVFTEEMNAEVRHRLAQVVERHNAIIDFCTDLTRQ) are Extracellular-facing. A helical transmembrane segment spans residues 277 to 297 (FTVIVLMHFLSAAFVLCSTIL). At 298-307 (DIMLNTSSLS) the chain is on the cytoplasmic side. The chain crosses the membrane as a helical span at residues 308 to 328 (GLTYICYIIAALTQLFLYCFG). The Extracellular segment spans residues 329 to 402 (GNHVSESSAA…SYITLLKTFL (74 aa)).

The protein belongs to the insect chemoreceptor superfamily. Heteromeric odorant receptor channel (TC 1.A.69) family. Or1a subfamily. As to quaternary structure, interacts with Orco. Complexes exist early in the endomembrane system in olfactory sensory neurons (OSNs), coupling these complexes to the conserved ciliary trafficking pathway. In terms of tissue distribution, not expressed in either the antenna or maxillary palp.

Its subcellular location is the cell membrane. In terms of biological role, odorant receptor which mediates acceptance or avoidance behavior, depending on its substrates. The odorant receptor repertoire encodes a large collection of odor stimuli that vary widely in identity, intensity, and duration. May form a complex with Orco to form odorant-sensing units, providing sensitive and prolonged odorant signaling and calcium permeability. In Drosophila melanogaster (Fruit fly), this protein is Odorant receptor 22c (Or22c).